A 323-amino-acid chain; its full sequence is Thymidylate synthase (323 aa).

DUMP contacts are provided by residues Arg21 and 172-173 (RR). Residue Cys192 is the Nucleophile of the active site. DUMP contacts are provided by residues 214–217 (RSND), Asn225, and 255–257 (HVY). Asp217 serves as a coordination point for (6R)-5,10-methylene-5,6,7,8-tetrahydrofolate. (6R)-5,10-methylene-5,6,7,8-tetrahydrofolate is bound at residue Ala322.

It belongs to the thymidylate synthase family. Bacterial-type ThyA subfamily. Homodimer.

The protein resides in the cytoplasm. It catalyses the reaction dUMP + (6R)-5,10-methylene-5,6,7,8-tetrahydrofolate = 7,8-dihydrofolate + dTMP. The protein operates within pyrimidine metabolism; dTTP biosynthesis. Its function is as follows. Catalyzes the reductive methylation of 2'-deoxyuridine-5'-monophosphate (dUMP) to 2'-deoxythymidine-5'-monophosphate (dTMP) while utilizing 5,10-methylenetetrahydrofolate (mTHF) as the methyl donor and reductant in the reaction, yielding dihydrofolate (DHF) as a by-product. This enzymatic reaction provides an intracellular de novo source of dTMP, an essential precursor for DNA biosynthesis. This chain is Thymidylate synthase, found in Pseudomonas putida (strain ATCC 47054 / DSM 6125 / CFBP 8728 / NCIMB 11950 / KT2440).